Consider the following 469-residue polypeptide: 3-isopropylmalate dehydratase large subunit (469 aa).

Residues cysteine 347, cysteine 408, and cysteine 411 each coordinate [4Fe-4S] cluster.

Belongs to the aconitase/IPM isomerase family. LeuC type 1 subfamily. In terms of assembly, heterodimer of LeuC and LeuD. It depends on [4Fe-4S] cluster as a cofactor.

It carries out the reaction (2R,3S)-3-isopropylmalate = (2S)-2-isopropylmalate. It functions in the pathway amino-acid biosynthesis; L-leucine biosynthesis; L-leucine from 3-methyl-2-oxobutanoate: step 2/4. Catalyzes the isomerization between 2-isopropylmalate and 3-isopropylmalate, via the formation of 2-isopropylmaleate. The chain is 3-isopropylmalate dehydratase large subunit from Haemophilus influenzae (strain 86-028NP).